A 277-amino-acid polypeptide reads, in one-letter code: NH(3)-dependent NAD(+) synthetase (277 aa).

ATP is bound at residue 46-53; it reads GISGGQDS. D52 is a binding site for Mg(2+). Residue R142 coordinates deamido-NAD(+). T162 is an ATP binding site. E167 is a Mg(2+) binding site. Residues K175 and D182 each contribute to the deamido-NAD(+) site. Residues K191 and T213 each coordinate ATP. 263-264 serves as a coordination point for deamido-NAD(+); it reads HK.

Belongs to the NAD synthetase family. In terms of assembly, homodimer.

It carries out the reaction deamido-NAD(+) + NH4(+) + ATP = AMP + diphosphate + NAD(+) + H(+). Its pathway is cofactor biosynthesis; NAD(+) biosynthesis; NAD(+) from deamido-NAD(+) (ammonia route): step 1/1. Its function is as follows. Catalyzes the ATP-dependent amidation of deamido-NAD to form NAD. Uses ammonia as a nitrogen source. This chain is NH(3)-dependent NAD(+) synthetase, found in Corynebacterium glutamicum (strain ATCC 13032 / DSM 20300 / JCM 1318 / BCRC 11384 / CCUG 27702 / LMG 3730 / NBRC 12168 / NCIMB 10025 / NRRL B-2784 / 534).